A 249-amino-acid polypeptide reads, in one-letter code: Transmembrane protein 51 (249 aa).

The next 2 membrane-spanning stretches (helical) occupy residues 17-37 (IGLGMLVLGVIMAMWNLVPGF) and 64-84 (VAYVLVGAGMMLLLLAICLSI). Disordered regions lie at residues 95–126 (ELARIQQQAGTVPHSQEEDSQEEEEDVSSRYY), 161–199 (TGLDEATPTSTRAETETSPGHAPDRQNSKLAKRLKPLKV), and 213–249 (RITLPDKNVPPPSIEPLTPPPLYDEVQAKAPDARPPD). Residues 99–108 (IQQQAGTVPH) are compositionally biased toward polar residues. 4 positions are modified to phosphoserine: Ser109, Ser114, Ser178, and Ser188. Over residues 167-178 (TPTSTRAETETS) the composition is skewed to polar residues. Over residues 190 to 199 (LAKRLKPLKV) the composition is skewed to basic residues. Pro residues predominate over residues 220–234 (NVPPPSIEPLTPPPL).

Its subcellular location is the membrane. The polypeptide is Transmembrane protein 51 (Tmem51) (Mus musculus (Mouse)).